Consider the following 237-residue polypeptide: Bax inhibitor 1 (237 aa).

Residues methionine 1 to lysine 29 are Cytoplasmic-facing. Lysine 7 is covalently cross-linked (Glycyl lysine isopeptide (Lys-Gly) (interchain with G-Cter in ubiquitin)). Residues valine 30–valine 50 form a helical membrane-spanning segment. Over threonine 51–histidine 52 the chain is Lumenal. Residues phenylalanine 53–alanine 73 traverse the membrane as a helical segment. The Cytoplasmic segment spans residues threonine 74 to glycine 86. A helical transmembrane segment spans residues leucine 87 to isoleucine 107. The Lumenal portion of the chain corresponds to alanine 108–serine 112. A helical membrane pass occupies residues isoleucine 113–leucine 133. The Cytoplasmic portion of the chain corresponds to tyrosine 134–serine 139. A helical transmembrane segment spans residues tyrosine 140–glycine 160. Topologically, residues asparagine 161–serine 166 are lumenal. Residues isoleucine 167–phenylalanine 187 form a helical membrane-spanning segment. Residues aspartate 188–histidine 206 lie on the Cytoplasmic side of the membrane. An intramembrane region (helical) is located at residues cysteine 207 to methionine 227. The Cytoplasmic segment spans residues asparagine 228–lysine 237.

This sequence belongs to the BI1 family. In terms of assembly, interacts with BCL2 and BCL2L1. Interacts with ERN1. Post-translationally, ubiquitinated by BFAR, leading to proteasomal degradation. As to expression, highly abundant in testis.

It is found in the endoplasmic reticulum membrane. Functionally, endoplasmic reticulum (ER)-resident protein that confers cellular protection as an anti-apoptotic protein by limiting multiple stress-inducing pathways surrounding the endoplasmic reticulum and mitochondria. Inhibits the activities of the key sensor for the endoplasmic reticulum unfolded protein response IRE1alpha/ERN1 both directly and by blocking BAX/BAK binding. Modulates ER calcium homeostasis by acting as a calcium-leak channel. Negatively regulates autophagy and autophagosome formation, especially during periods of nutrient deprivation, and reduces cell survival during starvation. The chain is Bax inhibitor 1 (TMBIM6) from Homo sapiens (Human).